Reading from the N-terminus, the 349-residue chain is Phenylalanine--tRNA ligase alpha subunit (349 aa).

Glu-259 serves as a coordination point for Mg(2+).

The protein belongs to the class-II aminoacyl-tRNA synthetase family. Phe-tRNA synthetase alpha subunit type 1 subfamily. As to quaternary structure, tetramer of two alpha and two beta subunits. Mg(2+) is required as a cofactor.

The protein localises to the cytoplasm. It catalyses the reaction tRNA(Phe) + L-phenylalanine + ATP = L-phenylalanyl-tRNA(Phe) + AMP + diphosphate + H(+). This Lactobacillus gasseri (strain ATCC 33323 / DSM 20243 / BCRC 14619 / CIP 102991 / JCM 1131 / KCTC 3163 / NCIMB 11718 / NCTC 13722 / AM63) protein is Phenylalanine--tRNA ligase alpha subunit.